Consider the following 100-residue polypeptide: CCAAT/enhancer-binding protein homolog 2 (100 aa).

Disordered regions lie at residues M1 to E60 and A79 to V100. The bZIP domain maps to E17–Y80. The basic motif stretch occupies residues K23–K48. Residues R24–N83 adopt a coiled-coil conformation. Residues R39–E60 are compositionally biased toward basic and acidic residues. The segment at L52–L73 is leucine-zipper. Positions G88–V100 are enriched in pro residues.

This sequence belongs to the bZIP family. C/EBP subfamily. As to quaternary structure, interacts with transcription factor zip-11. Expressed broadly in somatic tissues including the intestine.

It localises to the nucleus. Its function is as follows. Transcription factor that binds to the promoter and the enhancer regions of target genes. Regulates expression of genes involved in fat metabolism, including ech-1.1 and fat-5. Has a protective role in response to infection by the Gram-negative bacterium P.aeruginosa. Required for the activation of infection response gene irg-1 following P.aeruginosa infection. Required to prevent P.aeruginosa ToxA-mediated lethality. May also function in concert with transcription factor zip-11 to mediate immune responses, independently of the pmk-1/p38 MAPK pathway. May act together with the bZIP transcription factor, zip-2. The polypeptide is CCAAT/enhancer-binding protein homolog 2 (Caenorhabditis elegans).